The chain runs to 585 residues: Isocitrate dehydrogenase kinase/phosphatase (585 aa).

ATP is bound by residues 315–321 (APGVKGM) and Lys-336. Residue Asp-371 is part of the active site.

Belongs to the AceK family.

It is found in the cytoplasm. It catalyses the reaction L-seryl-[isocitrate dehydrogenase] + ATP = O-phospho-L-seryl-[isocitrate dehydrogenase] + ADP + H(+). In terms of biological role, bifunctional enzyme which can phosphorylate or dephosphorylate isocitrate dehydrogenase (IDH) on a specific serine residue. This is a regulatory mechanism which enables bacteria to bypass the Krebs cycle via the glyoxylate shunt in response to the source of carbon. When bacteria are grown on glucose, IDH is fully active and unphosphorylated, but when grown on acetate or ethanol, the activity of IDH declines drastically concomitant with its phosphorylation. This is Isocitrate dehydrogenase kinase/phosphatase from Photorhabdus laumondii subsp. laumondii (strain DSM 15139 / CIP 105565 / TT01) (Photorhabdus luminescens subsp. laumondii).